A 346-amino-acid polypeptide reads, in one-letter code: Glucose-6-phosphatase 3 (346 aa).

Residues 1-24 (MESTLGAGIAMAEALQNQLPWLEN) are Lumenal-facing. Residues 25 to 45 (VWLWVTFLGDPKSLFLFYFPA) form a helical membrane-spanning segment. At 46-54 (AYYASRRVG) the chain is on the cytoplasmic side. The chain crosses the membrane as a helical span at residues 55 to 75 (IAVLWISLITEWLNLVFKWFL). Residues 76–108 (FGDRPFWWVHESGYYSQAPAQVHQFPSSCETGP) lie on the Lumenal side of the membrane. Arg-79 contributes to the substrate binding site. A helical membrane pass occupies residues 109–129 (GSPSGHCMITGAALWPIMTAV). His-114 serves as the catalytic Proton donor. The Cytoplasmic portion of the chain corresponds to 130 to 140 (SSQMATRAHSR). The chain crosses the membrane as a helical span at residues 141–162 (WVRVIPSLAYCTFLLAVGLSRV). Arg-161 provides a ligand contact to substrate. The Lumenal portion of the chain corresponds to 163 to 167 (FLLAH). His-167 (nucleophile) is an active-site residue. A helical membrane pass occupies residues 168-186 (FPHQVLAGLITGAVLGWLM). At 187 to 197 (TPQVPMERELS) the chain is on the cytoplasmic side. The helical transmembrane segment at 198 to 218 (FYGLTSLALLLGASLIYWTLF) threads the bilayer. Over 219–254 (TLGLDLSWSINLASKWCERPEWVHLDSRPFASLSRD) the chain is Lumenal. Residues 255–273 (SGAALGLGIALHSPCYAQV) traverse the membrane as a helical segment. Topologically, residues 274 to 283 (RRAHLGYGQK) are cytoplasmic. Residues 284-304 (LVCLVLAMGLLGPLNWLGYPP) form a helical membrane-spanning segment. Over 305-307 (QIS) the chain is Lumenal. A helical transmembrane segment spans residues 308–328 (LFYIFNFLKYTLWPCLVLALV). Residues 329–346 (PWLVHMFSAQEAPPIRSS) lie on the Cytoplasmic side of the membrane.

Belongs to the glucose-6-phosphatase family.

The protein localises to the endoplasmic reticulum membrane. It carries out the reaction D-glucose 6-phosphate + H2O = D-glucose + phosphate. The protein operates within carbohydrate biosynthesis; gluconeogenesis. Inhibited by vanadate. Its function is as follows. Hydrolyzes glucose-6-phosphate to glucose in the endoplasmic reticulum. May form with the glucose-6-phosphate transporter (SLC37A4/G6PT) a ubiquitously expressed complex responsible for glucose production through glycogenolysis and gluconeogenesis. Probably required for normal neutrophil function. This is Glucose-6-phosphatase 3 (G6PC3) from Bos taurus (Bovine).